Consider the following 265-residue polypeptide: Eukaryotic translation initiation factor 3 subunit J (265 aa).

The segment at 1–71 is disordered; that stretch reads MSWDDEAING…KESSADRALL (71 aa). Over residues 23–32 the composition is skewed to acidic residues; it reads WDAEIGDDEP. Basic and acidic residues predominate over residues 42 to 71; that stretch reads EEKKPAPKPKKEQPKKVKKGKESSADRALL. A Phosphoserine modification is found at Ser65. Thr75 bears the Phosphothreonine mark. Ser92 carries the post-translational modification Phosphoserine. Residues 219 to 265 are disordered; the sequence is VRGGTATGGAGKKKVKGKTNLGGAFKKDQDFDLDGPDDFEFGDDDFM. At Arg220 the chain carries Omega-N-methylarginine. The span at 249-265 shows a compositional bias: acidic residues; that stretch reads FDLDGPDDFEFGDDDFM.

This sequence belongs to the eIF-3 subunit J family. Probable component of the eukaryotic translation initiation factor 3 (eIF-3) complex. Is not part of the eIF-3 core complex, with which it is associated in substochiometric amounts.

The protein localises to the cytoplasm. Its function is as follows. Component of the eukaryotic translation initiation factor 3 (eIF-3) complex, which is involved in protein synthesis of a specialized repertoire of mRNAs and, together with other initiation factors, stimulates binding of mRNA and methionyl-tRNAi to the 40S ribosome. The eIF-3 complex specifically targets and initiates translation of a subset of mRNAs involved in cell proliferation. In Saccharomyces cerevisiae (strain ATCC 204508 / S288c) (Baker's yeast), this protein is Eukaryotic translation initiation factor 3 subunit J.